The following is a 602-amino-acid chain: ATP-dependent zinc metalloprotease FtsH 3 (602 aa).

Residues 1 to 18 (MNSWFLQVSKRLGPAGRR) are Cytoplasmic-facing. Residues 19 to 39 (LWLLGFMGVVLAVTLGLALRA) traverse the membrane as a helical segment. Residues 40–117 (ARESATQRTA…DFASREDPSR (78 aa)) are Periplasmic-facing. Residues 118 to 138 (AASAVLPVVVLAAVGFALFTV) traverse the membrane as a helical segment. Residues 139–602 (SRRRSPKVFS…RRPRPEDQAA (464 aa)) lie on the Cytoplasmic side of the membrane. Position 202–209 (202–209 (GEPGTGKT)) interacts with ATP. His425 is a Zn(2+) binding site. Residue Glu426 is part of the active site. Positions 429 and 501 each coordinate Zn(2+).

The protein in the central section; belongs to the AAA ATPase family. It in the C-terminal section; belongs to the peptidase M41 family. In terms of assembly, homohexamer. It depends on Zn(2+) as a cofactor.

Its subcellular location is the cell inner membrane. In terms of biological role, acts as a processive, ATP-dependent zinc metallopeptidase for both cytoplasmic and membrane proteins. Plays a role in the quality control of integral membrane proteins. In Sorangium cellulosum (strain So ce56) (Polyangium cellulosum (strain So ce56)), this protein is ATP-dependent zinc metalloprotease FtsH 3.